The primary structure comprises 391 residues: Metallophosphoesterase 1 (391 aa).

Residues 25–45 (TVVIISVLLFCEYFIYHLVIF) traverse the membrane as a helical segment. Asp-72, Asp-114, Asn-152, His-244, His-298, and His-300 together coordinate a divalent metal cation. Residues 352–372 (VLATYGAAAVFLVVLILAHLE) form a helical membrane-spanning segment.

The protein belongs to the metallophosphoesterase superfamily. MPPE1 family. In terms of assembly, interacts with GPI-anchor proteins (via the GPI portion). Interacts with TMED10. Requires Mn(2+) as cofactor.

The protein resides in the endoplasmic reticulum-Golgi intermediate compartment membrane. In terms of biological role, metallophosphoesterase that catalyzes the removal of a side-chain ethanolamine-phosphate (EtNP) from the second mannose of the GPI-anchor protein intermediate. Participates in the glycan remodeling steps of GPI-anchor maturation to allow an efficient transport of GPI-anchor proteins from the endoplasmic reticulum to the Golgi. The protein is Metallophosphoesterase 1 of Cricetulus griseus (Chinese hamster).